Consider the following 704-residue polypeptide: Ankyrin repeat and LEM domain-containing protein 1 homolog (704 aa).

Residues 1–29 are disordered; it reads MPPNGAITTTPRSRMPPTTPSSGKSRPKK. Residues 8–22 are compositionally biased toward low complexity; it reads TTTPRSRMPPTTPSS. ANK repeat units lie at residues 28 to 59 and 63 to 93; these read KKETLHYLAASSSTTSVDAARTLLERGANVNA and DGATPLHYACTHDNVAMAQLLLTFGADPMSA. 3 disordered regions span residues 247–293, 314–358, and 381–421; these read NEDV…SQET, NAGL…ANTT, and SKSA…TTVD. The segment covering 276–288 has biased composition (basic residues); sequence RKQRTPVNHHKRS. 2 stretches are compositionally biased toward low complexity: residues 329-346 and 384-405; these read EPAIAAVKTPKTPTTPKT and AKSSKLKTPSKPTTSSSTSFSS. The LEM domain occupies 425–470; sequence IRKIRRLREGELKSELKKFGISPAGPLDARTRRLYEKKLLIERRKI. The region spanning 525–635 is the GIY-YIG domain; the sequence is YNAFCYLIMD…AVKLKNLRNK (111 aa).

Post-translationally, phosphorylated. Phosphorylated during telophase when localized at the midbody.

The protein localises to the cytoplasm. Its subcellular location is the nucleus. The protein resides in the chromosome. It localises to the midbody. It is found in the cytoskeleton. The protein localises to the spindle. With respect to regulation, inhibited by EDTA. Functionally, endonuclease which, in association with baf-1, plays an essential role during embryogenesis in the DNA repair response following DNA damage probably by ensuring proper chromosome segregation. Also required during postembryonic cell divisions after DNA damage caused by ionizing radiation to ensure normal cell proliferation. Resolves chromatin bridges in late mitosis that result from incomplete DNA replication, defective chromosome condensation or unresolved recombination intermediates. Together with brc-1, contributes to genome integrity by resolving mitotic chromatin bridges that result from incomplete processing of DNA breaks. In parallel to the slx-1/mus-81 pathway, acts in processing early recombination intermediates in meiotic prophase I to prevent illegitimate recombination. Also involved in processing remaining, erroneous recombination intermediates that persist into the second meiotic division. This Caenorhabditis elegans protein is Ankyrin repeat and LEM domain-containing protein 1 homolog.